Reading from the N-terminus, the 289-residue chain is tRNA pseudouridine synthase B (289 aa).

Asp-38 acts as the Nucleophile in catalysis.

Belongs to the pseudouridine synthase TruB family. Type 1 subfamily.

It catalyses the reaction uridine(55) in tRNA = pseudouridine(55) in tRNA. Responsible for synthesis of pseudouridine from uracil-55 in the psi GC loop of transfer RNAs. The protein is tRNA pseudouridine synthase B of Clostridium tetani (strain Massachusetts / E88).